Here is a 228-residue protein sequence, read N- to C-terminus: Ribonuclease 3 (228 aa).

Residues 5–127 (LMALQARLQH…VIGAVYLDAG (123 aa)) enclose the RNase III domain. A Mg(2+)-binding site is contributed by E40. D44 is a catalytic residue. Residues D113 and E116 each contribute to the Mg(2+) site. E116 is a catalytic residue. The DRBM domain maps to 154–224 (DPKTELQEWL…AAAMLQTLKA (71 aa)).

Belongs to the ribonuclease III family. As to quaternary structure, homodimer. The cofactor is Mg(2+).

The protein localises to the cytoplasm. It catalyses the reaction Endonucleolytic cleavage to 5'-phosphomonoester.. Digests double-stranded RNA. Involved in the processing of primary rRNA transcript to yield the immediate precursors to the large and small rRNAs (23S and 16S). Processes some mRNAs, and tRNAs when they are encoded in the rRNA operon. Processes pre-crRNA and tracrRNA of type II CRISPR loci if present in the organism. The protein is Ribonuclease 3 of Albidiferax ferrireducens (strain ATCC BAA-621 / DSM 15236 / T118) (Rhodoferax ferrireducens).